A 164-amino-acid chain; its full sequence is Lipoprotein signal peptidase (164 aa).

A run of 4 helical transmembrane segments spans residues Leu6–Leu26, Val39–Ala59, Gly65–Ala85, and Thr88–Ile108. Active-site residues include Asp118 and Asp140. Residues Val141–Val161 traverse the membrane as a helical segment.

The protein belongs to the peptidase A8 family.

Its subcellular location is the cell inner membrane. The enzyme catalyses Release of signal peptides from bacterial membrane prolipoproteins. Hydrolyzes -Xaa-Yaa-Zaa-|-(S,diacylglyceryl)Cys-, in which Xaa is hydrophobic (preferably Leu), and Yaa (Ala or Ser) and Zaa (Gly or Ala) have small, neutral side chains.. It functions in the pathway protein modification; lipoprotein biosynthesis (signal peptide cleavage). In terms of biological role, this protein specifically catalyzes the removal of signal peptides from prolipoproteins. In Rhodopseudomonas palustris (strain TIE-1), this protein is Lipoprotein signal peptidase.